A 1512-amino-acid polypeptide reads, in one-letter code: Sterol 3-beta-glucosyltransferase (1512 aa).

Disordered stretches follow at residues 22-50 and 150-222; these read FSGS…YHSL and DEHT…DTDV. Acidic residues predominate over residues 156–169; the sequence is SEEEDSADKEEESI. The span at 190-222 shows a compositional bias: low complexity; that stretch reads TTATLITTQITRTKTATTATPTPTPTSSVDTDV. Residues 296–331 enclose the GRAM 1 domain; it reads LQRVFDLSDEDTFCGNYSAWLIKDVLLQGHVYLTKD. The PH domain occupies 359 to 520; it reads SIVYSGNLGL…WCNNITKLIF (162 aa). Residues 816–880 form the GRAM 2 domain; it reads RNFQSHFSTN…TDIEEVRASR (65 aa). The UDP-alpha-D-glucose site is built by Ser1024, Arg1025, Asp1027, Asn1299, Ile1328, His1330, His1343, Ser1346, Gly1347, Thr1348, Asp1367, and Gln1368. The tract at residues 1450–1512 is disordered; it reads YKRHHPVPSG…NNSPSQNSSN (63 aa). The segment covering 1467 to 1493 has biased composition (acidic residues); the sequence is TDSDDYDDDEDDDESDKDDEEEEEENS. Positions 1501–1512 are enriched in polar residues; the sequence is GVNNSPSQNSSN.

Belongs to the glycosyltransferase 28 family.

It localises to the cytoplasm. Its subcellular location is the membrane. The enzyme catalyses a sterol + UDP-alpha-D-glucose = a sterol 3-beta-D-glucoside + UDP + H(+). It catalyses the reaction ergosterol + UDP-alpha-D-glucose = ergosteryl 3-beta-D-glucoside + UDP + H(+). Functionally, sterol glycosyltransferase responsible for the glycosylation of ergosterol to form ergosterol-glucoside. In Candida albicans (strain SC5314 / ATCC MYA-2876) (Yeast), this protein is Sterol 3-beta-glucosyltransferase.